Reading from the N-terminus, the 90-residue chain is Small ribosomal subunit protein bS18 (90 aa).

This sequence belongs to the bacterial ribosomal protein bS18 family. In terms of assembly, part of the 30S ribosomal subunit. Forms a tight heterodimer with protein bS6.

Functionally, binds as a heterodimer with protein bS6 to the central domain of the 16S rRNA, where it helps stabilize the platform of the 30S subunit. This is Small ribosomal subunit protein bS18 from Bordetella petrii (strain ATCC BAA-461 / DSM 12804 / CCUG 43448).